We begin with the raw amino-acid sequence, 206 residues long: Putative precorrin-2 dehydrogenase (206 aa).

Residues 20 to 21 (SV) and 41 to 46 (KEFDEE) contribute to the NAD(+) site.

Belongs to the precorrin-2 dehydrogenase / sirohydrochlorin ferrochelatase family. As to quaternary structure, homodimer.

The catalysed reaction is precorrin-2 + NAD(+) = sirohydrochlorin + NADH + 2 H(+). It functions in the pathway porphyrin-containing compound metabolism; siroheme biosynthesis; sirohydrochlorin from precorrin-2: step 1/1. Its function is as follows. Involved in the archaeal biosynthesis of heme. Catalyzes the oxiation of precorrin-2 into sirohydroclorin. This chain is Putative precorrin-2 dehydrogenase, found in Methanocaldococcus jannaschii (strain ATCC 43067 / DSM 2661 / JAL-1 / JCM 10045 / NBRC 100440) (Methanococcus jannaschii).